A 496-amino-acid chain; its full sequence is MELVVKSVSPETLKTATLVVTINESRVLIGAAQLVDIKSGGAISAVLERGDLAGKSGQTLLLTNLQNIKAERVLLVGIGKDGELSDRQLKKIAGSVLSSLKGLGGSDAVIALDDLSVKNRDTYGKARLFVEALADGEYVFDRFKTQKAEVRPLKKITLLTDKVSVADVERAANHAQAIATGMALTRDLGNLPPNICHPTYLGEEAKALGKAHKNLKVEIHDEKKLAELGMGSFLAVAQGSAQPPRLIVMNYQGGKKGDKPFVLVGKGITFDTGGISIKPAAGMDEMKFDMCGAASVFGTLRAVLELKLPINVVCILACAENMPSGTATRPGDIVTTMSGQTVEILNTDAEGRLVLCDALTYAERFKPQAVIDIATLTGACVVALGGHTSGLLGNNDALINQLLDAGKLADDRAWQLPLFDEYQEQLDSPFADIANIGGPKGGTITAACFLSRFTKAYEWAHLDIAGTAWLSGGKDKGATGRPVPLLTQYLLDRAGV.

2 residues coordinate Mn(2+): lysine 266 and aspartate 271. The active site involves lysine 278. Mn(2+) contacts are provided by aspartate 289, aspartate 348, and glutamate 350. Residue arginine 352 is part of the active site.

The protein belongs to the peptidase M17 family. Requires Mn(2+) as cofactor.

The protein resides in the cytoplasm. It catalyses the reaction Release of an N-terminal amino acid, Xaa-|-Yaa-, in which Xaa is preferably Leu, but may be other amino acids including Pro although not Arg or Lys, and Yaa may be Pro. Amino acid amides and methyl esters are also readily hydrolyzed, but rates on arylamides are exceedingly low.. The enzyme catalyses Release of an N-terminal amino acid, preferentially leucine, but not glutamic or aspartic acids.. Functionally, presumably involved in the processing and regular turnover of intracellular proteins. Catalyzes the removal of unsubstituted N-terminal amino acids from various peptides. The polypeptide is Probable cytosol aminopeptidase (Pseudomonas syringae pv. tomato (strain ATCC BAA-871 / DC3000)).